Here is a 90-residue protein sequence, read N- to C-terminus: DNA-directed RNA polymerase subunit omega (90 aa).

This sequence belongs to the RNA polymerase subunit omega family. The RNAP catalytic core consists of 2 alpha, 1 beta, 1 beta' and 1 omega subunit. When a sigma factor is associated with the core the holoenzyme is formed, which can initiate transcription.

It catalyses the reaction RNA(n) + a ribonucleoside 5'-triphosphate = RNA(n+1) + diphosphate. Promotes RNA polymerase assembly. Latches the N- and C-terminal regions of the beta' subunit thereby facilitating its interaction with the beta and alpha subunits. The sequence is that of DNA-directed RNA polymerase subunit omega from Alteromonas mediterranea (strain DSM 17117 / CIP 110805 / LMG 28347 / Deep ecotype).